We begin with the raw amino-acid sequence, 210 residues long: Dynein regulatory complex protein 12 (210 aa).

A disordered region spans residues 1–23; that stretch reads MPPKNKEKGKKSGAQKKKKNWGA. A compositionally biased stretch (basic residues) spans 7–20; the sequence is EKGKKSGAQKKKKN. A coiled-coil region spans residues 49–161; that stretch reads RDEARRAKAS…EAKYEEILHD (113 aa). Residues 188–210 form a disordered region; sequence HKEQQRQFGLTPPGSLRPPAPSL.

Belongs to the DRC12 family. As to quaternary structure, component of the nexin-dynein regulatory complex (N-DRC).

The protein resides in the cytoplasm. The protein localises to the cytoskeleton. It localises to the flagellum axoneme. Functionally, component of the nexin-dynein regulatory complex (N-DRC), a key regulator of ciliary/flagellar motility which maintains the alignment and integrity of the distal axoneme and regulates microtubule sliding in motile axonemes. In Homo sapiens (Human), this protein is Dynein regulatory complex protein 12.